Consider the following 592-residue polypeptide: Aspartate--tRNA ligase (592 aa).

An L-aspartate-binding site is contributed by Glu-171. The segment at 195–198 (QLFK) is aspartate. Arg-217 lines the L-aspartate pocket. Residues 217-219 (RDE) and Gln-226 each bind ATP. His-448 serves as a coordination point for L-aspartate. Glu-482 is a binding site for ATP. Arg-489 is an L-aspartate binding site. Residue 534 to 537 (GLDR) coordinates ATP.

This sequence belongs to the class-II aminoacyl-tRNA synthetase family. Type 1 subfamily. In terms of assembly, homodimer.

It localises to the cytoplasm. The catalysed reaction is tRNA(Asp) + L-aspartate + ATP = L-aspartyl-tRNA(Asp) + AMP + diphosphate. Catalyzes the attachment of L-aspartate to tRNA(Asp) in a two-step reaction: L-aspartate is first activated by ATP to form Asp-AMP and then transferred to the acceptor end of tRNA(Asp). This Vibrio parahaemolyticus serotype O3:K6 (strain RIMD 2210633) protein is Aspartate--tRNA ligase.